A 210-amino-acid chain; its full sequence is Meiotic coiled-coil protein 7 (210 aa).

Residues 77-148 adopt a coiled-coil conformation; it reads KRSRESVLGS…LKTQLSNLNH (72 aa).

The protein belongs to the MND1 family. Interacts with meu13.

The protein localises to the cytoplasm. The protein resides in the nucleus. In terms of biological role, required for meiotic recombination. The sequence is that of Meiotic coiled-coil protein 7 (mcp7) from Schizosaccharomyces pombe (strain 972 / ATCC 24843) (Fission yeast).